A 64-amino-acid polypeptide reads, in one-letter code: Large ribosomal subunit protein uL29 (64 aa).

It belongs to the universal ribosomal protein uL29 family.

The polypeptide is Large ribosomal subunit protein uL29 (Ligilactobacillus salivarius (strain UCC118) (Lactobacillus salivarius)).